We begin with the raw amino-acid sequence, 877 residues long: Translation initiation factor IF-2 (877 aa).

Positions 48–289 (SSFQNSAPAE…QITKRKERPL (242 aa)) are disordered. Over residues 78-89 (RKNEKKPEENNT) the composition is skewed to basic and acidic residues. Residues 92 to 101 (KSNRRRNNKR) are compositionally biased toward basic residues. Residues 102 to 116 (RSSDRARDNKERDAK) are compositionally biased toward basic and acidic residues. The span at 123-132 (KAAALLQQFK) shows a compositional bias: low complexity. Composition is skewed to basic and acidic residues over residues 135-155 (QRAE…EYHE) and 162-189 (KEQS…EKKV). Basic residues predominate over residues 277–286 (PRKQITKRKE). In terms of domain architecture, tr-type G spans 378 to 547 (KRPPVVTIMG…LLQADVMELK (170 aa)). A G1 region spans residues 387 to 394 (GHVDHGKT). 387–394 (GHVDHGKT) lines the GTP pocket. Residues 412 to 416 (GITQR) form a G2 region. Residues 433 to 436 (DTPG) form a G3 region. Residues 433–437 (DTPGH) and 487–490 (NKMD) contribute to the GTP site. Positions 487 to 490 (NKMD) are G4. A G5 region spans residues 523–525 (SAK).

It belongs to the TRAFAC class translation factor GTPase superfamily. Classic translation factor GTPase family. IF-2 subfamily.

Its subcellular location is the cytoplasm. Functionally, one of the essential components for the initiation of protein synthesis. Protects formylmethionyl-tRNA from spontaneous hydrolysis and promotes its binding to the 30S ribosomal subunits. Also involved in the hydrolysis of GTP during the formation of the 70S ribosomal complex. This Lactobacillus acidophilus (strain ATCC 700396 / NCK56 / N2 / NCFM) protein is Translation initiation factor IF-2.